We begin with the raw amino-acid sequence, 280 residues long: Energy-coupling factor transporter ATP-binding protein EcfA (280 aa).

The ABC transporter domain maps to 5 to 240 (IDVKNLTYKY…DEMLKLTGLE (236 aa)). An ATP-binding site is contributed by 40-47 (GHNGSGKS).

It belongs to the ABC transporter superfamily. Energy-coupling factor EcfA family. As to quaternary structure, forms a stable energy-coupling factor (ECF) transporter complex composed of 2 membrane-embedded substrate-binding proteins (S component), 2 ATP-binding proteins (A component) and 2 transmembrane proteins (T component).

The protein resides in the cell membrane. ATP-binding (A) component of a common energy-coupling factor (ECF) ABC-transporter complex. Unlike classic ABC transporters this ECF transporter provides the energy necessary to transport a number of different substrates. In Pediococcus pentosaceus (strain ATCC 25745 / CCUG 21536 / LMG 10740 / 183-1w), this protein is Energy-coupling factor transporter ATP-binding protein EcfA.